Consider the following 155-residue polypeptide: MKVEIDSFSGAKIYPGRGTLFVRGDSKIFRFQNSKSASLFKQRKNPRRVAWTVLYRRHHKKGITEEVAKKRSRKTVKAQRAIVGASLELIKERRSLKPEVRKAKRDDKAKADKEKKKADKAARKAEKAKLAAAQGSKVSKQQAKGAFQKVAATSR.

A compositionally biased stretch (basic and acidic residues) spans 98–129 (PEVRKAKRDDKAKADKEKKKADKAARKAEKAK). Positions 98 to 155 (PEVRKAKRDDKAKADKEKKKADKAARKAEKAKLAAAQGSKVSKQQAKGAFQKVAATSR) are disordered.

The protein belongs to the eukaryotic ribosomal protein eL24 family.

The chain is Large ribosomal subunit protein eL24 (RPL24) from Candida glabrata (strain ATCC 2001 / BCRC 20586 / JCM 3761 / NBRC 0622 / NRRL Y-65 / CBS 138) (Yeast).